Here is a 413-residue protein sequence, read N- to C-terminus: Arginine biosynthesis bifunctional protein ArgJ, mitochondrial (413 aa).

Residues Thr-168, Lys-194, Thr-205, and Glu-292 each contribute to the substrate site. Thr-205 acts as the Nucleophile in catalysis.

Belongs to the ArgJ family. In terms of assembly, heterodimer of an alpha and a beta chain. The alpha and beta chains are autoproteolytically processed from a single precursor protein within the mitochondrion.

Its subcellular location is the mitochondrion matrix. It catalyses the reaction N(2)-acetyl-L-ornithine + L-glutamate = N-acetyl-L-glutamate + L-ornithine. It carries out the reaction L-glutamate + acetyl-CoA = N-acetyl-L-glutamate + CoA + H(+). Its pathway is amino-acid biosynthesis; L-arginine biosynthesis; L-ornithine and N-acetyl-L-glutamate from L-glutamate and N(2)-acetyl-L-ornithine (cyclic): step 1/1. It participates in amino-acid biosynthesis; L-arginine biosynthesis; N(2)-acetyl-L-ornithine from L-glutamate: step 1/4. Functionally, catalyzes two activities which are involved in the cyclic version of arginine biosynthesis: the synthesis of acetylglutamate from glutamate and acetyl-CoA, and of ornithine by transacetylation between acetylornithine and glutamate. The chain is Arginine biosynthesis bifunctional protein ArgJ, mitochondrial from Clavispora lusitaniae (strain ATCC 42720) (Yeast).